A 358-amino-acid chain; its full sequence is WD repeat-containing protein 53 (358 aa).

WD repeat units follow at residues Met-1–Glu-38, Leu-43–Val-80, Asp-85–Leu-123, Lys-127–Leu-166, Trp-173–Arg-225, and Glu-232–Ala-270. Positions Glu-273–Glu-311 are disordered. Residues Lys-279–Thr-294 are compositionally biased toward basic residues. Residues Cys-295 to Val-306 show a composition bias toward polar residues. One copy of the WD 7 repeat lies at Asn-314–Leu-355.

The protein belongs to the WD repeat WDR53 family.

The protein is WD repeat-containing protein 53 (WDR53) of Homo sapiens (Human).